A 172-amino-acid polypeptide reads, in one-letter code: MEEYAREPCPWRIVDDCGGAFTMGVIGGGVFQAIKGFRNAPVGIRHRFRGSVNAVRIRAPQIGGSFAVWGGLFSTIDCGLVRLRGKEDPWNSISSGALTGAVLAARSGPLAMVGSAMMGGILLALIEGVGILLTRYTAQQFRNAPPFLEDPSQLTPKEGSPAPGYPNYQQYH.

An intrachain disulfide couples cysteine 9 to cysteine 78. The next 3 helical transmembrane spans lie at 17-37, 61-77, and 113-133; these read CGGA…IKGF, QIGG…STID, and VGSA…GILL. The segment at 147-172 is disordered; that stretch reads FLEDPSQLTPKEGSPAPGYPNYQQYH.

Belongs to the Tim17/Tim22/Tim23 family. As to quaternary structure, component of the TIM23 complex at least composed of TIMM23, TIMM17 (TIMM17A or TIMM17B) and TIMM50. The complex interacts with the TIMM44 component of the PAM complex. The complex also interacts with DNAJC15.

It localises to the mitochondrion inner membrane. Functionally, essential component of the TIM23 complex, a complex that mediates the translocation of transit peptide-containing proteins across the mitochondrial inner membrane. The sequence is that of Mitochondrial import inner membrane translocase subunit Tim17-B (Timm17b) from Mus musculus (Mouse).